A 631-amino-acid chain; its full sequence is 1-deoxy-D-xylulose-5-phosphate synthase (631 aa).

Thiamine diphosphate contacts are provided by residues His-76 and 117–119 (AHS). Mg(2+) is bound at residue Asp-148. Thiamine diphosphate contacts are provided by residues 149–150 (GA), Asn-177, Tyr-284, and Glu-365. Position 177 (Asn-177) interacts with Mg(2+).

Belongs to the transketolase family. DXPS subfamily. In terms of assembly, homodimer. It depends on Mg(2+) as a cofactor. The cofactor is thiamine diphosphate.

The catalysed reaction is D-glyceraldehyde 3-phosphate + pyruvate + H(+) = 1-deoxy-D-xylulose 5-phosphate + CO2. The protein operates within metabolic intermediate biosynthesis; 1-deoxy-D-xylulose 5-phosphate biosynthesis; 1-deoxy-D-xylulose 5-phosphate from D-glyceraldehyde 3-phosphate and pyruvate: step 1/1. Functionally, catalyzes the acyloin condensation reaction between C atoms 2 and 3 of pyruvate and glyceraldehyde 3-phosphate to yield 1-deoxy-D-xylulose-5-phosphate (DXP). The protein is 1-deoxy-D-xylulose-5-phosphate synthase of Methylibium petroleiphilum (strain ATCC BAA-1232 / LMG 22953 / PM1).